A 905-amino-acid chain; its full sequence is Core protein VP3 (905 aa).

Belongs to the orbivirus VP3 family.

Its subcellular location is the virion. Functionally, the VP3 protein is one of the five proteins (with VP1, VP4, VP6 and VP7) which form the inner capsid of the virus. This is Core protein VP3 (Segment-3) from African horse sickness virus (AHSV).